The following is a 571-amino-acid chain: Phototropic-responsive NPH3 family protein NPY1 (571 aa).

Positions 29 to 97 constitute a BTB domain; the sequence is SDVTIHVGEV…CYGMTVTLNA (69 aa). Positions 210–468 constitute an NPH3 domain; that stretch reads DWWVEDVCEL…VQVLYFEQLR (259 aa). Tyrosine 409 is modified (phosphotyrosine). A disordered region spans residues 475–571; sequence ASVAASSHSP…SSRRRRHSIS (97 aa). Residues 484–504 are compositionally biased toward basic and acidic residues; sequence PVEKTEENKGEEATKKVELSK. Positions 540-562 are enriched in low complexity; it reads SNKSSEVSSGSSQSPPAKSSSSS.

The protein belongs to the NPH3 family. In terms of assembly, component of a complex made of PINs (e.g. PIN1 and PIN2), MAB4/MELs (e.g. NPY1/MAB4 and NPY5/MEL1) and AGC kinases (e.g. D6PK and PID) at the plasma membrane. Binds directly to PIN2 and PID. Accumulates in organ primordia such as cotyledons, leaves and floral organs. Expressed mainly in the apical regions of embryos including cotyledon tips and the apical meristem. Induced by the transcription factor ARF5/MP at the periphery of inflorescence meristems. Highly expressed in primary root tips and radicles.

It is found in the late endosome. It localises to the cell membrane. Its subcellular location is the cytoplasm. The protein resides in the cytosol. The protein operates within protein modification; protein ubiquitination. Functionally, may act as a substrate-specific adapter of an E3 ubiquitin-protein ligase complex (CUL3-RBX1-BTB) which mediates the ubiquitination and subsequent proteasomal degradation of target proteins. Coregulates with PID the auxin-mediated plant organogenesis. Regulates basipetal PIN proteins (e.g. PIN1) polarization to establish inward auxin transport from the L1 surface of incipient organ primordia; this process is essential for the progression of flower organs development. Recruited to the plasma membrane by PINs (e.g. PIN1 and PIN2) and, in concert with AGC kinases-mediated (e.g. D6PK and PID) PINs phosphorylation, maintains their cell polarity (apical or basal) through limiting lateral diffusion-based escape. Induces auxin response in inner cell layers through a shift in PIN1 localization. Influences cotyledon development by regulating auxin distribution mainly in the protodermal cell layer. May play an essential role in root gravitropic responses. This Arabidopsis thaliana (Mouse-ear cress) protein is Phototropic-responsive NPH3 family protein NPY1.